The chain runs to 332 residues: DNA-directed RNA polymerase subunit alpha (332 aa).

The segment at 1–232 (MKGYLKDFLK…DQLSVFVDLE (232 aa)) is alpha N-terminal domain (alpha-NTD). Residues 247–332 (IDPVLLRPID…SLGDRARIAG (86 aa)) form an alpha C-terminal domain (alpha-CTD) region.

This sequence belongs to the RNA polymerase alpha chain family. Homodimer. The RNAP catalytic core consists of 2 alpha, 1 beta, 1 beta' and 1 omega subunit. When a sigma factor is associated with the core the holoenzyme is formed, which can initiate transcription.

It catalyses the reaction RNA(n) + a ribonucleoside 5'-triphosphate = RNA(n+1) + diphosphate. DNA-dependent RNA polymerase catalyzes the transcription of DNA into RNA using the four ribonucleoside triphosphates as substrates. This chain is DNA-directed RNA polymerase subunit alpha, found in Halorhodospira halophila (strain DSM 244 / SL1) (Ectothiorhodospira halophila (strain DSM 244 / SL1)).